The following is a 299-amino-acid chain: Lathosterol oxidase (299 aa).

3 consecutive transmembrane segments (helical) span residues 32 to 52, 79 to 99, and 117 to 137; these read VSLL…CATL, FTVK…LLEL, and IHLI…IYWI. A Fatty acid hydroxylase domain is found at 124 to 252; that stretch reads ISFLFFTDML…YFTLWDRIGG (129 aa). Positions 138-143 match the Histidine box-1 motif; that stretch reads HRGLHH. The Histidine box-2 signature appears at 151 to 155; that stretch reads HKPHH. Residues 228 to 233 carry the Histidine box-3 motif; the sequence is HHTDHH. At Ser-253 the chain carries Phosphoserine.

It belongs to the sterol desaturase family. It depends on Fe cation as a cofactor.

The protein localises to the endoplasmic reticulum membrane. The enzyme catalyses a Delta(7)-sterol + 2 Fe(II)-[cytochrome b5] + O2 + 2 H(+) = a Delta(5),Delta(7)-sterol + 2 Fe(III)-[cytochrome b5] + 2 H2O. It catalyses the reaction lathosterol + 2 Fe(II)-[cytochrome b5] + O2 + 2 H(+) = 7-dehydrocholesterol + 2 Fe(III)-[cytochrome b5] + 2 H2O. It carries out the reaction 5alpha-cholesta-7,24-dien-3beta-ol + 2 Fe(II)-[cytochrome b5] + O2 + 2 H(+) = 7-dehydrodesmosterol + 2 Fe(III)-[cytochrome b5] + 2 H2O. It participates in steroid biosynthesis; cholesterol biosynthesis. Catalyzes the penultimate step of the biosynthesis of cholesterol, the dehydrogenation of lathosterol into 7-dehydrocholesterol (7-DHC). Cholesterol is the major sterol component in mammalian membranes and a precursor for bile acid and steroid hormone synthesis. In addition to its essential role in cholesterol biosynthesis, it also indirectly regulates ferroptosis through the production of 7-DHC. By diverting the spread of damage caused by peroxyl radicals from the phospholipid components to its sterol nucleus, 7-DHC prevents this form of cell death. In Rattus norvegicus (Rat), this protein is Lathosterol oxidase.